The following is a 437-amino-acid chain: tRNA-2-methylthio-N(6)-dimethylallyladenosine synthase (437 aa).

The MTTase N-terminal domain occupies 1–115 (MKVYIETMGC…ISQVIHKEKA (115 aa)). Residues cysteine 10, cysteine 46, cysteine 78, cysteine 148, cysteine 152, and cysteine 155 each coordinate [4Fe-4S] cluster. One can recognise a Radical SAM core domain in the interval 134–367 (KKAQIRSLLN…QNRHKEILEE (234 aa)). A TRAM domain is found at 370 to 436 (KLEVGKTHVV…KGRLIAAIKG (67 aa)).

The protein belongs to the methylthiotransferase family. MiaB subfamily. As to quaternary structure, monomer. It depends on [4Fe-4S] cluster as a cofactor.

Its subcellular location is the cytoplasm. It carries out the reaction N(6)-dimethylallyladenosine(37) in tRNA + (sulfur carrier)-SH + AH2 + 2 S-adenosyl-L-methionine = 2-methylsulfanyl-N(6)-dimethylallyladenosine(37) in tRNA + (sulfur carrier)-H + 5'-deoxyadenosine + L-methionine + A + S-adenosyl-L-homocysteine + 2 H(+). Functionally, catalyzes the methylthiolation of N6-(dimethylallyl)adenosine (i(6)A), leading to the formation of 2-methylthio-N6-(dimethylallyl)adenosine (ms(2)i(6)A) at position 37 in tRNAs that read codons beginning with uridine. The sequence is that of tRNA-2-methylthio-N(6)-dimethylallyladenosine synthase from Helicobacter pylori (strain P12).